The following is a 555-amino-acid chain: Oxygen-dependent choline dehydrogenase (555 aa).

Position 4–33 (Asp4–Glu33) interacts with FAD. Residues Gln180–Arg202 are disordered. His473 (proton acceptor) is an active-site residue.

This sequence belongs to the GMC oxidoreductase family. FAD is required as a cofactor.

The catalysed reaction is choline + A = betaine aldehyde + AH2. It carries out the reaction betaine aldehyde + NAD(+) + H2O = glycine betaine + NADH + 2 H(+). It participates in amine and polyamine biosynthesis; betaine biosynthesis via choline pathway; betaine aldehyde from choline (cytochrome c reductase route): step 1/1. Involved in the biosynthesis of the osmoprotectant glycine betaine. Catalyzes the oxidation of choline to betaine aldehyde and betaine aldehyde to glycine betaine at the same rate. The protein is Oxygen-dependent choline dehydrogenase of Serratia proteamaculans (strain 568).